A 123-amino-acid chain; its full sequence is Large ribosomal subunit protein eL8 (123 aa).

The protein belongs to the eukaryotic ribosomal protein eL8 family. As to quaternary structure, part of the 50S ribosomal subunit. Probably part of the RNase P complex.

It localises to the cytoplasm. In terms of biological role, multifunctional RNA-binding protein that recognizes the K-turn motif in ribosomal RNA, the RNA component of RNase P, box H/ACA, box C/D and box C'/D' sRNAs. This Pyrococcus abyssi (strain GE5 / Orsay) protein is Large ribosomal subunit protein eL8.